The chain runs to 37 residues: Esculentin-2SE (37 aa).

An intrachain disulfide couples Cys-31 to Cys-37.

In terms of tissue distribution, expressed by the skin glands.

It localises to the secreted. Its function is as follows. Mast cell degranulating peptide. Causes histamine release from rat peritoneal mast cells in vitro. Has antibacterial activity against the Gram-negative bacterium E.coli K12 and Gram-positive bacterium M.luteus NCT C2665. The sequence is that of Esculentin-2SE from Lithobates sevosus (Dusky gopher frog).